A 364-amino-acid chain; its full sequence is Protein LATERAL BRANCHING OXIDOREDUCTASE 1 (364 aa).

The Fe2OG dioxygenase domain occupies 203-312 (RFEEMFGEAV…RLTIVTFYAP (110 aa)). Fe cation is bound by residues histidine 235, aspartate 237, and histidine 293. Arginine 303 contacts 2-oxoglutarate.

Belongs to the iron/ascorbate-dependent oxidoreductase family. Monomer. It depends on Fe(2+) as a cofactor. The cofactor is L-ascorbate. As to expression, expressed in the vasculature throughout the plant and in the buds and root tips.

It is found in the cytoplasm. It carries out the reaction (11R)-methyl carlactonoate + 2-oxoglutarate + O2 = (11R)-hydroxymethyl carlactonoate + succinate + CO2. In terms of biological role, oxoglutarate-dependent dioxygenase involved in the biosynthesis of strigolactone natural products, bioactive compounds promoting plant fitness and soil microbe interactions, but preventing shoot branching. Catalyzes the hydroxylation of (11R)-methyl carlactonoate (MeCLA) to produce (11R)-hydroxymethyl carlactonoate (1'-HO-MeCLA) in final stages of strigolactone biosynthesis, downstream of MAX1 and CLAMT. This Arabidopsis thaliana (Mouse-ear cress) protein is Protein LATERAL BRANCHING OXIDOREDUCTASE 1.